The following is a 252-amino-acid chain: Thiazole synthase (252 aa).

The active-site Schiff-base intermediate with DXP is the Lys-98. Residues Gly-159, 185 to 186 (AG), and 207 to 208 (AT) contribute to the 1-deoxy-D-xylulose 5-phosphate site.

Belongs to the ThiG family. In terms of assembly, homotetramer. Forms heterodimers with either ThiH or ThiS.

Its subcellular location is the cytoplasm. The catalysed reaction is [ThiS sulfur-carrier protein]-C-terminal-Gly-aminoethanethioate + 2-iminoacetate + 1-deoxy-D-xylulose 5-phosphate = [ThiS sulfur-carrier protein]-C-terminal Gly-Gly + 2-[(2R,5Z)-2-carboxy-4-methylthiazol-5(2H)-ylidene]ethyl phosphate + 2 H2O + H(+). It participates in cofactor biosynthesis; thiamine diphosphate biosynthesis. Its function is as follows. Catalyzes the rearrangement of 1-deoxy-D-xylulose 5-phosphate (DXP) to produce the thiazole phosphate moiety of thiamine. Sulfur is provided by the thiocarboxylate moiety of the carrier protein ThiS. In vitro, sulfur can be provided by H(2)S. This Mycolicibacterium smegmatis (strain ATCC 700084 / mc(2)155) (Mycobacterium smegmatis) protein is Thiazole synthase.